Consider the following 84-residue polypeptide: Small ribosomal subunit protein uS17 (84 aa).

It belongs to the universal ribosomal protein uS17 family. As to quaternary structure, part of the 30S ribosomal subunit.

Its function is as follows. One of the primary rRNA binding proteins, it binds specifically to the 5'-end of 16S ribosomal RNA. This chain is Small ribosomal subunit protein uS17, found in Alkaliphilus metalliredigens (strain QYMF).